The sequence spans 342 residues: Photosystem II D2 protein (342 aa).

At 1–29 (ERGWFDILDDWLKRDRFVFVGWSGILLFP) the chain is on the cytoplasmic side. The chain crosses the membrane as a helical span at residues 30–50 (CAYLALGGWLTGTTFVTSWYT). The Lumenal portion of the chain corresponds to 51-113 (HGLASSYLEG…IALHGAFGLI (63 aa)). His-107 contributes to the chlorophyll a binding site. Residues 114–130 (GFMLRQFEIARLVGVRP) traverse the membrane as a helical segment. The pheophytin a site is built by Gln-119 and Asn-132. The Cytoplasmic portion of the chain corresponds to 131 to 141 (YNAIAFSAPIA). The helical transmembrane segment at 142 to 155 (VFVSVFLIYPLGQS) threads the bilayer. Over 156 to 196 (SWFFAPSFGVAAIFRFLLFFQGFHNWTLNPFHMMGVAGVLG) the chain is Lumenal. Residue His-187 coordinates chlorophyll a. Residues 197–217 (GALLCAIHGATVENTLFQDGE) traverse the membrane as a helical segment. His-204 and Phe-251 together coordinate a plastoquinone. His-204 serves as a coordination point for Fe cation. Residues 218–267 (GASTFRAFNPTQAEETYSMVTANRFWSQIFGIAFSNKRWLHFFMLFVPVT) lie on the Cytoplasmic side of the membrane. Position 258 (His-258) interacts with Fe cation. A helical transmembrane segment spans residues 268–284 (GLWMSAIGVVGLALNLR). At 285 to 342 (SYDFISQEIRAAEDPEFETFYTKNLLLNEGIRAWMAPQDQPHENFVFPEEVLPRGNAL) the chain is on the lumenal side.

The protein belongs to the reaction center PufL/M/PsbA/D family. PSII is composed of 1 copy each of membrane proteins PsbA, PsbB, PsbC, PsbD, PsbE, PsbF, PsbH, PsbI, PsbJ, PsbK, PsbL, PsbM, PsbT, PsbX, PsbY, PsbZ, Psb30/Ycf12, peripheral proteins PsbO, CyanoQ (PsbQ), PsbU, PsbV and a large number of cofactors. It forms dimeric complexes. The cofactor is The D1/D2 heterodimer binds P680, chlorophylls that are the primary electron donor of PSII, and subsequent electron acceptors. It shares a non-heme iron and each subunit binds pheophytin, quinone, additional chlorophylls, carotenoids and lipids. There is also a Cl(-1) ion associated with D1 and D2, which is required for oxygen evolution. The PSII complex binds additional chlorophylls, carotenoids and specific lipids..

It localises to the cellular thylakoid membrane. The catalysed reaction is 2 a plastoquinone + 4 hnu + 2 H2O = 2 a plastoquinol + O2. In terms of biological role, photosystem II (PSII) is a light-driven water:plastoquinone oxidoreductase that uses light energy to abstract electrons from H(2)O, generating O(2) and a proton gradient subsequently used for ATP formation. It consists of a core antenna complex that captures photons, and an electron transfer chain that converts photonic excitation into a charge separation. The D1/D2 (PsbA/PsbD) reaction center heterodimer binds P680, the primary electron donor of PSII as well as several subsequent electron acceptors. D2 is needed for assembly of a stable PSII complex. The protein is Photosystem II D2 protein of Thermostichus vulcanus (Synechococcus vulcanus).